Reading from the N-terminus, the 343-residue chain is N-acetyl-gamma-glutamyl-phosphate reductase (343 aa).

Cysteine 149 is a catalytic residue.

The protein belongs to the NAGSA dehydrogenase family. Type 1 subfamily.

The protein resides in the cytoplasm. It catalyses the reaction N-acetyl-L-glutamate 5-semialdehyde + phosphate + NADP(+) = N-acetyl-L-glutamyl 5-phosphate + NADPH + H(+). The protein operates within amino-acid biosynthesis; L-arginine biosynthesis; N(2)-acetyl-L-ornithine from L-glutamate: step 3/4. Functionally, catalyzes the NADPH-dependent reduction of N-acetyl-5-glutamyl phosphate to yield N-acetyl-L-glutamate 5-semialdehyde. This is N-acetyl-gamma-glutamyl-phosphate reductase from Methanococcus maripaludis (strain C6 / ATCC BAA-1332).